The chain runs to 191 residues: Fe/S biogenesis protein NfuA (191 aa).

Residues cysteine 149 and cysteine 152 each contribute to the [4Fe-4S] cluster site.

This sequence belongs to the NfuA family. As to quaternary structure, homodimer. [4Fe-4S] cluster is required as a cofactor.

In terms of biological role, involved in iron-sulfur cluster biogenesis. Binds a 4Fe-4S cluster, can transfer this cluster to apoproteins, and thereby intervenes in the maturation of Fe/S proteins. Could also act as a scaffold/chaperone for damaged Fe/S proteins. The sequence is that of Fe/S biogenesis protein NfuA from Erwinia tasmaniensis (strain DSM 17950 / CFBP 7177 / CIP 109463 / NCPPB 4357 / Et1/99).